Here is a 152-residue protein sequence, read N- to C-terminus: Syntaxin-8A (152 aa).

Residues 1–14 show a composition bias toward low complexity; that stretch reads MNNNNNFNSNFNSN. Positions 1-22 are disordered; that stretch reads MNNNNNFNSNFNSNRISSTQPY. At 1-131 the chain is on the cytoplasmic side; sequence MNNNNNFNSN…LTQQSKTTGY (131 aa). The t-SNARE coiled-coil homology domain maps to 60 to 122; it reads KRDMEEQDKM…RNTTKNLITL (63 aa). The helical; Anchor for type IV membrane protein transmembrane segment at 132-152 threads the bilayer; the sequence is CSAICFLLLVLLVIIILASVL.

The protein belongs to the syntaxin family. As to quaternary structure, component of the SNARE complex composed of syn7A, syn8A, vamp7A and vti1A.

Its subcellular location is the endosome membrane. Functionally, involved in the targeting and/or fusion of transport vesicles to their target membrane during transport of proteins from the early endosome to the lysosome. Required for fusion of late endosomes with lysosomes and homotypic lysosomal fusion. This Dictyostelium discoideum (Social amoeba) protein is Syntaxin-8A.